We begin with the raw amino-acid sequence, 129 residues long: Small ribosomal subunit protein uS8 (129 aa).

It belongs to the universal ribosomal protein uS8 family. Part of the 30S ribosomal subunit. Contacts proteins S5 and S12.

In terms of biological role, one of the primary rRNA binding proteins, it binds directly to 16S rRNA central domain where it helps coordinate assembly of the platform of the 30S subunit. This is Small ribosomal subunit protein uS8 from Legionella pneumophila (strain Corby).